The chain runs to 763 residues: ATP-dependent RNA helicase glh-1 (763 aa).

A disordered region spans residues 1–30; it reads MSDGWSDSESAAKAKTGFGSGGGFGGGNNG. A compositionally biased stretch (gly residues) spans 18 to 30; the sequence is FGSGGGFGGGNNG. 7 repeat units span residues 24 to 33, 34 to 43, 44 to 53, 54 to 63, 64 to 73, 74 to 83, and 84 to 93. The segment at 24–93 is 7 X 10 AA tandem repeats, Gly-rich; the sequence is FGGGNNGGSG…FGGGSTGGSP (70 aa). 2 consecutive CCHC-type zinc fingers follow at residues 158–175 and 183–200; these read NNCF…DCPE and RVCY…ECTE. Positions 193–230 are disordered; the sequence is HTSRECTEERKPREGRTGGFGGGAGFGNNGGNDGFGGD. Residues 194-208 show a composition bias toward basic and acidic residues; the sequence is TSRECTEERKPREGR. Positions 209–230 are enriched in gly residues; sequence TGGFGGGAGFGNNGGNDGFGGD. 2 consecutive CCHC-type zinc fingers follow at residues 242-259 and 262-279; these read MKCF…ECPE and RGCF…ECPN. The short motif at 341-369 is the Q motif element; sequence KTFAEANLTETMQKNVAHAGYSKTTPIQQ. Residues 372 to 556 enclose the Helicase ATP-binding domain; it reads LPLVHQGYDI…RAFLRENYVM (185 aa). Residue 385–392 participates in ATP binding; that stretch reads AQTGSGKT. Positions 423 to 427 match the Phosphodegron motif; that stretch reads ILTPT. Residues 499–502 carry the DEAD box motif; that stretch reads DEAD. A Helicase C-terminal domain is found at 592-739; that stretch reads DIDSYTTEKS…IVPDWMQGAA (148 aa).

Belongs to the DEAD box helicase family. DDX4/VASA subfamily. Interacts with csn-5; this may prevent glh-1 degradation induced by kgb-1. Interacts with zyx-1. Interacts (via the N-terminal region containing the four CCHC zinc fingers) with pan-1. Interacts with kgb-1; this may promote glh-1 degradation by the proteasome. Post-translationally, phosphorylated by kgb-1 (in vitro); this may be responsible for its degradation by the proteasome.

It is found in the cytoplasm. Its subcellular location is the cytoplasmic granule. The protein localises to the perinuclear region. It carries out the reaction ATP + H2O = ADP + phosphate + H(+). Its function is as follows. Probable ATP-binding RNA helicase. May act redundantly with the P-granule component glh-4 to regulate the formation of the granular structure of P-granules in embryos. Plays a role in positively regulating the localization of pgl-1 to P-granules. May play a role in transgenerational epigenetic inheritance. May protect somatic cells from excessive apoptosis during normal development. This chain is ATP-dependent RNA helicase glh-1, found in Caenorhabditis elegans.